The following is a 232-amino-acid chain: 5'-methylthioadenosine/S-adenosylhomocysteine nucleosidase (232 aa).

E12 acts as the Proton acceptor in catalysis. Residues G78, I152, and 173-174 (ME) each bind substrate. The active-site Proton donor is D197.

The protein belongs to the PNP/UDP phosphorylase family. MtnN subfamily. Homodimer.

It catalyses the reaction S-adenosyl-L-homocysteine + H2O = S-(5-deoxy-D-ribos-5-yl)-L-homocysteine + adenine. It carries out the reaction S-methyl-5'-thioadenosine + H2O = 5-(methylsulfanyl)-D-ribose + adenine. The enzyme catalyses 5'-deoxyadenosine + H2O = 5-deoxy-D-ribose + adenine. It functions in the pathway amino-acid biosynthesis; L-methionine biosynthesis via salvage pathway; S-methyl-5-thio-alpha-D-ribose 1-phosphate from S-methyl-5'-thioadenosine (hydrolase route): step 1/2. Its function is as follows. Catalyzes the irreversible cleavage of the glycosidic bond in both 5'-methylthioadenosine (MTA) and S-adenosylhomocysteine (SAH/AdoHcy) to adenine and the corresponding thioribose, 5'-methylthioribose and S-ribosylhomocysteine, respectively. Also cleaves 5'-deoxyadenosine, a toxic by-product of radical S-adenosylmethionine (SAM) enzymes, into 5-deoxyribose and adenine. Thus, is required for in vivo function of the radical SAM enzymes biotin synthase and lipoic acid synthase, that are inhibited by 5'-deoxyadenosine accumulation. This is 5'-methylthioadenosine/S-adenosylhomocysteine nucleosidase from Salmonella enteritidis PT4 (strain P125109).